The primary structure comprises 119 residues: Ribonuclease P protein component (119 aa).

The protein belongs to the RnpA family. In terms of assembly, consists of a catalytic RNA component (M1 or rnpB) and a protein subunit.

The enzyme catalyses Endonucleolytic cleavage of RNA, removing 5'-extranucleotides from tRNA precursor.. Its function is as follows. RNaseP catalyzes the removal of the 5'-leader sequence from pre-tRNA to produce the mature 5'-terminus. It can also cleave other RNA substrates such as 4.5S RNA. The protein component plays an auxiliary but essential role in vivo by binding to the 5'-leader sequence and broadening the substrate specificity of the ribozyme. This Pasteurella multocida (strain Pm70) protein is Ribonuclease P protein component.